The sequence spans 516 residues: Cytochrome P450 monooxygenase ntnM (516 aa).

Residues 22-42 (IINVILSIAAIALIRALAISI) traverse the membrane as a helical segment. A heme-binding site is contributed by Cys453.

Belongs to the cytochrome P450 family. Heme is required as a cofactor.

Its subcellular location is the membrane. It functions in the pathway secondary metabolite biosynthesis; terpenoid biosynthesis. Functionally, cytochrome P450 monooxygenase; part of the gene cluster that mediates the biosynthesis of the meroterpenoids nectripenoids A and B, as well as cochliquninone D and isocochliquninone E. The pathway probably begins with the HR-PKS ntnH that catalyzes two chain-extension steps to form a reduced triketide, which then primes the SAT domain in the NR-PKS ntnG to initiate three more cycles of extension to give a linear hexaketide corresponding to the polyketide part of nectripenoids. The FAD-dependent monooxygenase ntnJ then performs an oxidative decarboxylation at C11 of the ntnH/ntnG product, via an electrophilic aromatic hydroxylation with concomitant ipso-decarboxylation. The membrane-bound polyprenyl transferase ntnF then introduces a farnesyl group before the FAD-dependent monooxygenase ntnK functions as the first epoxidase on terminal C12'-C13' olefin, followed by a second epoxidation on C7'-C8' catalyzed by ntnA. The terpene cyclase/mutase ntnI then initiates the sequential tricyclic ring formation through protonation of the terminal epoxide and catalyzes the regioselective and stereoselective 6/6/6-tricyclic ring formation. The cytochrome P450 monooxygenase ntnM may then hydroxylate C1'. This is Cytochrome P450 monooxygenase ntnM from Nectria sp.